We begin with the raw amino-acid sequence, 290 residues long: ATP synthase gamma chain (290 aa).

It belongs to the ATPase gamma chain family. As to quaternary structure, F-type ATPases have 2 components, CF(1) - the catalytic core - and CF(0) - the membrane proton channel. CF(1) has five subunits: alpha(3), beta(3), gamma(1), delta(1), epsilon(1). CF(0) has three main subunits: a, b and c.

The protein localises to the cell inner membrane. Produces ATP from ADP in the presence of a proton gradient across the membrane. The gamma chain is believed to be important in regulating ATPase activity and the flow of protons through the CF(0) complex. This Anaeromyxobacter sp. (strain K) protein is ATP synthase gamma chain.